We begin with the raw amino-acid sequence, 412 residues long: Phytoene synthase, chloroplastic (412 aa).

This sequence belongs to the phytoene/squalene synthase family. In terms of assembly, monomer. In terms of tissue distribution, expressed in roots, leaves, flower buds, sepals, petals, lips and lip crests.

The protein localises to the plastid. Its subcellular location is the chloroplast. The catalysed reaction is 2 (2E,6E,10E)-geranylgeranyl diphosphate = 15-cis-phytoene + 2 diphosphate. The protein operates within carotenoid biosynthesis; phytoene biosynthesis; all-trans-phytoene from geranylgeranyl diphosphate: step 1/1. In terms of biological role, catalyzes the reaction from prephytoene diphosphate to phytoene. The chain is Phytoene synthase, chloroplastic (PSY) from Oncidium hybrid cultivar (Orchid).